The sequence spans 891 residues: Protein translocase subunit SecA 1 (891 aa).

Residues Gln-85, 103-107 (GEGKT), and Asp-491 each bind ATP. Zn(2+) contacts are provided by Cys-877, Cys-879, Cys-888, and Cys-889.

It belongs to the SecA family. As to quaternary structure, monomer and homodimer. Part of the essential Sec protein translocation apparatus which comprises SecA, SecYEG and auxiliary proteins SecDF. Other proteins may also be involved. Requires Zn(2+) as cofactor.

The protein localises to the cell membrane. It is found in the cytoplasm. The enzyme catalyses ATP + H2O + cellular proteinSide 1 = ADP + phosphate + cellular proteinSide 2.. Part of the Sec protein translocase complex. Interacts with the SecYEG preprotein conducting channel. Has a central role in coupling the hydrolysis of ATP to the transfer of proteins into and across the cell membrane, serving as an ATP-driven molecular motor driving the stepwise translocation of polypeptide chains across the membrane. This chain is Protein translocase subunit SecA 1, found in Clostridioides difficile (strain 630) (Peptoclostridium difficile).